Here is a 218-residue protein sequence, read N- to C-terminus: Ribose-5-phosphate isomerase A (218 aa).

Substrate contacts are provided by residues Lys-7, 28–31 (TGST), 81–84 (DGAD), and 94–97 (KGGG). The Proton acceptor role is filled by Glu-103. Residue Lys-121 participates in substrate binding.

Belongs to the ribose 5-phosphate isomerase family. Homodimer.

The catalysed reaction is aldehydo-D-ribose 5-phosphate = D-ribulose 5-phosphate. It participates in carbohydrate degradation; pentose phosphate pathway; D-ribose 5-phosphate from D-ribulose 5-phosphate (non-oxidative stage): step 1/1. Catalyzes the reversible conversion of ribose-5-phosphate to ribulose 5-phosphate. This is Ribose-5-phosphate isomerase A from Vibrio vulnificus (strain YJ016).